The sequence spans 749 residues: Patatin-like phospholipase domain-containing protein AN0408 (749 aa).

Residues 1–11 show a composition bias toward basic and acidic residues; sequence MEKSAAGDNID. The tract at residues 1-21 is disordered; that stretch reads MEKSAAGDNIDKYSPSSIPDY. A helical transmembrane segment spans residues 92-112; that stretch reads WPFLLFVLGWITFLSVGYALT. In terms of domain architecture, PNPLA spans 280–471; sequence LCLSGGATFA…RTDIPIKALN (192 aa). Positions 311–315 match the GXSXG motif; it reads GTSGG. The active-site Nucleophile is Ser313. Asp458 (proton acceptor) is an active-site residue. The tract at residues 630–659 is disordered; it reads SIQPFPFDNGAAGADQKSNDPREERLNRNF. Residues 646–659 are compositionally biased toward basic and acidic residues; it reads KSNDPREERLNRNF.

It belongs to the PLPL family.

The protein resides in the membrane. In terms of biological role, probable lipid hydrolase. This is Patatin-like phospholipase domain-containing protein AN0408 from Emericella nidulans (strain FGSC A4 / ATCC 38163 / CBS 112.46 / NRRL 194 / M139) (Aspergillus nidulans).